A 338-amino-acid polypeptide reads, in one-letter code: UDP-N-acetylenolpyruvoylglucosamine reductase (338 aa).

The FAD-binding PCMH-type domain maps to 17–188 (IAARTDWWID…MYVDYRLRLR (172 aa)). Residue Arg164 is part of the active site. Ser237 functions as the Proton donor in the catalytic mechanism. Glu333 is an active-site residue.

Belongs to the MurB family. FAD serves as cofactor.

The protein resides in the cytoplasm. It catalyses the reaction UDP-N-acetyl-alpha-D-muramate + NADP(+) = UDP-N-acetyl-3-O-(1-carboxyvinyl)-alpha-D-glucosamine + NADPH + H(+). Its pathway is cell wall biogenesis; peptidoglycan biosynthesis. Cell wall formation. The polypeptide is UDP-N-acetylenolpyruvoylglucosamine reductase (Porphyromonas gingivalis (strain ATCC 33277 / DSM 20709 / CIP 103683 / JCM 12257 / NCTC 11834 / 2561)).